Reading from the N-terminus, the 325-residue chain is Methionyl-tRNA formyltransferase (325 aa).

Residue 112 to 115 (SLLP) coordinates (6S)-5,6,7,8-tetrahydrofolate.

Belongs to the Fmt family.

The enzyme catalyses L-methionyl-tRNA(fMet) + (6R)-10-formyltetrahydrofolate = N-formyl-L-methionyl-tRNA(fMet) + (6S)-5,6,7,8-tetrahydrofolate + H(+). Its function is as follows. Attaches a formyl group to the free amino group of methionyl-tRNA(fMet). The formyl group appears to play a dual role in the initiator identity of N-formylmethionyl-tRNA by promoting its recognition by IF2 and preventing the misappropriation of this tRNA by the elongation apparatus. This chain is Methionyl-tRNA formyltransferase, found in Roseiflexus sp. (strain RS-1).